A 287-amino-acid chain; its full sequence is Phycobilisome 32.1 kDa linker polypeptide, phycocyanin-associated, rod (287 aa).

Positions 2 to 180 (AITAAASRLG…LYRGYANSDR (179 aa)) constitute a PBS-linker domain. In terms of domain architecture, CpcD-like spans 235–287 (GRVYRIEVAGIRQPGYPGVRRSSTAFLVPYEQLSAKMQQLQRTGARIISVNPA).

It belongs to the phycobilisome linker protein family.

It localises to the cellular thylakoid membrane. Rod linker protein, associated with phycocyanin. Linker polypeptides determine the state of aggregation and the location of the disk-shaped phycobiliprotein units within the phycobilisome and modulate their spectroscopic properties in order to mediate a directed and optimal energy transfer. The protein is Phycobilisome 32.1 kDa linker polypeptide, phycocyanin-associated, rod (cpcC) of Thermosynechococcus vestitus (strain NIES-2133 / IAM M-273 / BP-1).